The primary structure comprises 53 residues: UPF0391 membrane protein Bcep18194_C7021 (53 aa).

The next 2 helical transmembrane spans lie at 5-25 (AVIF…GIAA) and 30-50 (IAKI…LLGV).

This sequence belongs to the UPF0391 family.

The protein localises to the cell membrane. This Burkholderia lata (strain ATCC 17760 / DSM 23089 / LMG 22485 / NCIMB 9086 / R18194 / 383) protein is UPF0391 membrane protein Bcep18194_C7021.